The following is a 440-amino-acid chain: MLSIANNCCISLAQNEWPLYKVAVVGTGRSGMAAARLLHSLGASIRIVDKTRENVSKTFMDWIKQTNCEVMFGEHCPKQFEDIDIVIPSPGVPLNLLKPHFLNTIQVLSETELAWYQLSNEKVIAITGTNGKTTIASLCAAMLVEQGISVFVGGNIGTPLSEYVLCKKKVSVVVLELSSFQLQTCSLFRPDIAICSNISINHLDYHRNMDEYISAKLNICKNQCESDLAILKPGMEALVDSYNLKARVVFYRDLGNFSTSRLLGVHNLENAEAAWLACKELGVTEEIAKKVVTTFEPLEHRLEQVRLLNGVLYVNDSKGTTVEALRAALESFKQPILLLAGGRFKGGDLTSLRPIIKKQVRIVGLFGNSREYFEDAWGDIIPITWDNTLEQAVKRLSNLAHNGEVILLAPATSSFDQYMNYIERGNDFKRIVHEVLNEHC.

128–134 (GTNGKTT) provides a ligand contact to ATP.

The protein belongs to the MurCDEF family.

The protein localises to the cytoplasm. It catalyses the reaction UDP-N-acetyl-alpha-D-muramoyl-L-alanine + D-glutamate + ATP = UDP-N-acetyl-alpha-D-muramoyl-L-alanyl-D-glutamate + ADP + phosphate + H(+). The protein operates within cell wall biogenesis; peptidoglycan biosynthesis. In terms of biological role, cell wall formation. Catalyzes the addition of glutamate to the nucleotide precursor UDP-N-acetylmuramoyl-L-alanine (UMA). In Lawsonia intracellularis (strain PHE/MN1-00), this protein is UDP-N-acetylmuramoylalanine--D-glutamate ligase.